The following is a 460-amino-acid chain: Cysteine--tRNA ligase (460 aa).

Zn(2+) is bound at residue Cys28. The short motif at 30 to 40 is the 'HIGH' region element; it reads VTIYDLCHIGH. Positions 209, 234, and 238 each coordinate Zn(2+). Positions 266-270 match the 'KMSKS' region motif; sequence KMSKS. Lys269 lines the ATP pocket.

This sequence belongs to the class-I aminoacyl-tRNA synthetase family. Monomer. The cofactor is Zn(2+).

Its subcellular location is the cytoplasm. It carries out the reaction tRNA(Cys) + L-cysteine + ATP = L-cysteinyl-tRNA(Cys) + AMP + diphosphate. The sequence is that of Cysteine--tRNA ligase from Vibrio vulnificus (strain CMCP6).